The following is a 61-amino-acid chain: Small ribosomal subunit protein uS14 (61 aa).

Zn(2+)-binding residues include Cys24, Cys27, Cys40, and Cys43.

The protein belongs to the universal ribosomal protein uS14 family. Zinc-binding uS14 subfamily. In terms of assembly, part of the 30S ribosomal subunit. Contacts proteins S3 and S10. Zn(2+) serves as cofactor.

Functionally, binds 16S rRNA, required for the assembly of 30S particles and may also be responsible for determining the conformation of the 16S rRNA at the A site. This chain is Small ribosomal subunit protein uS14, found in Limosilactobacillus fermentum (strain NBRC 3956 / LMG 18251) (Lactobacillus fermentum).